A 484-amino-acid chain; its full sequence is Hexokinase-1 (484 aa).

In terms of domain architecture, Hexokinase spans 25 to 465 (KTLQDHLDEL…SGVGAALVSA (441 aa)). The hexokinase small subdomain stretch occupies residues 79-212 (DGNEHGSYLA…CNNVRLNAIL (134 aa)). ATP is bound at residue 90-95 (DLGGTN). Residues 160–161 (SY), 177–178 (TK), and 213–214 (SD) contribute to the substrate site. The interval 213 to 454 (SDTTGTLVAS…SKVVTIPAED (242 aa)) is hexokinase large subdomain. Threonine 237 is an ATP binding site. 3 residues coordinate substrate: asparagine 240, glutamate 269, and glutamate 302. Residues 307–308 (GC), 344–348 (TSVLS), and 419–423 (SVYNL) contribute to the ATP site.

It belongs to the hexokinase family. In terms of assembly, monomer.

The catalysed reaction is a D-hexose + ATP = a D-hexose 6-phosphate + ADP + H(+). It catalyses the reaction D-mannose + ATP = D-mannose 6-phosphate + ADP + H(+). The enzyme catalyses D-fructose + ATP = D-fructose 6-phosphate + ADP + H(+). It carries out the reaction D-glucose + ATP = D-glucose 6-phosphate + ADP + H(+). It functions in the pathway carbohydrate metabolism; hexose metabolism. It participates in carbohydrate degradation; glycolysis; D-glyceraldehyde 3-phosphate and glycerone phosphate from D-glucose: step 1/4. Functionally, catalyzes the phosphorylation of hexose (six-carbon sugars) to hexose 6-phosphate. Phosphorylates D-fructose, D-mannose and, to a lower extent, D-glucose. Compared to hxk2, has low affinity for D-glucose. This chain is Hexokinase-1, found in Schizosaccharomyces pombe (strain 972 / ATCC 24843) (Fission yeast).